The chain runs to 417 residues: Serine hydroxymethyltransferase (417 aa).

(6S)-5,6,7,8-tetrahydrofolate contacts are provided by residues leucine 112 and 116-118 (GHL). Lysine 221 is modified (N6-(pyridoxal phosphate)lysine). Glutamate 247 lines the (6S)-5,6,7,8-tetrahydrofolate pocket.

This sequence belongs to the SHMT family. In terms of assembly, homodimer. It depends on pyridoxal 5'-phosphate as a cofactor.

It is found in the cytoplasm. The enzyme catalyses (6R)-5,10-methylene-5,6,7,8-tetrahydrofolate + glycine + H2O = (6S)-5,6,7,8-tetrahydrofolate + L-serine. The protein operates within one-carbon metabolism; tetrahydrofolate interconversion. It functions in the pathway amino-acid biosynthesis; glycine biosynthesis; glycine from L-serine: step 1/1. In terms of biological role, catalyzes the reversible interconversion of serine and glycine with tetrahydrofolate (THF) serving as the one-carbon carrier. This reaction serves as the major source of one-carbon groups required for the biosynthesis of purines, thymidylate, methionine, and other important biomolecules. Also exhibits THF-independent aldolase activity toward beta-hydroxyamino acids, producing glycine and aldehydes, via a retro-aldol mechanism. This is Serine hydroxymethyltransferase from Borrelia recurrentis (strain A1).